We begin with the raw amino-acid sequence, 845 residues long: BLOC-2 complex member HPS5 homolog (845 aa).

The disordered stretch occupies residues 239 to 268 (PTEEDLEDAKSMEGSDDNDNDQRSSPSGVK).

The protein belongs to the HPS5 family.

Functionally, has a role in the biogenesis of eye pigment granules. Eye pigment granules are specialized forms of late endosomes or lysosomes. Biogenesis of pigment granules in the eye requires molecular components required for protein delivery to lysosomes. This Aedes aegypti (Yellowfever mosquito) protein is BLOC-2 complex member HPS5 homolog.